A 205-amino-acid chain; its full sequence is High frequency lysogenization protein HflD homolog (205 aa).

It belongs to the HflD family.

The protein localises to the cytoplasm. The protein resides in the cell inner membrane. This Shewanella baltica (strain OS185) protein is High frequency lysogenization protein HflD homolog.